Here is a 100-residue protein sequence, read N- to C-terminus: Urease subunit gamma (100 aa).

This sequence belongs to the urease gamma subunit family. Heterotrimer of UreA (gamma), UreB (beta) and UreC (alpha) subunits. Three heterotrimers associate to form the active enzyme.

Its subcellular location is the cytoplasm. The enzyme catalyses urea + 2 H2O + H(+) = hydrogencarbonate + 2 NH4(+). The protein operates within nitrogen metabolism; urea degradation; CO(2) and NH(3) from urea (urease route): step 1/1. In Picosynechococcus sp. (strain ATCC 27264 / PCC 7002 / PR-6) (Agmenellum quadruplicatum), this protein is Urease subunit gamma.